The primary structure comprises 644 residues: 1-deoxy-D-xylulose-5-phosphate synthase (644 aa).

Thiamine diphosphate-binding positions include His78 and 120–122 (GHA). Asp149 is a binding site for Mg(2+). Thiamine diphosphate is bound by residues 150-151 (AA), Asn178, and Glu373. Asn178 is a Mg(2+) binding site.

This sequence belongs to the transketolase family. DXPS subfamily. Homodimer. Mg(2+) is required as a cofactor. The cofactor is thiamine diphosphate.

The catalysed reaction is D-glyceraldehyde 3-phosphate + pyruvate + H(+) = 1-deoxy-D-xylulose 5-phosphate + CO2. It participates in metabolic intermediate biosynthesis; 1-deoxy-D-xylulose 5-phosphate biosynthesis; 1-deoxy-D-xylulose 5-phosphate from D-glyceraldehyde 3-phosphate and pyruvate: step 1/1. Catalyzes the acyloin condensation reaction between C atoms 2 and 3 of pyruvate and glyceraldehyde 3-phosphate to yield 1-deoxy-D-xylulose-5-phosphate (DXP). In Chlamydia abortus (strain DSM 27085 / S26/3) (Chlamydophila abortus), this protein is 1-deoxy-D-xylulose-5-phosphate synthase.